The primary structure comprises 1872 residues: E3 ubiquitin-protein ligase UBR2 (1872 aa).

Residues 96–172 (TACTRLCFPS…DAFKCKNELN (77 aa)) form a UBR-type zinc finger. Lys709 is covalently cross-linked (Glycyl lysine isopeptide (Lys-Gly) (interchain with G-Cter in ubiquitin)). The tract at residues 1134 to 1240 (RYLMETAPHV…SSNTINSCCD (107 aa)) is interaction with UBC2. Residues 1203-1227 (NNSVDTSDISTPRTTSPSLSPTRIN) form a disordered region. Residues 1212–1225 (STPRTTSPSLSPTR) are compositionally biased toward low complexity. A phosphoserine mark is found at Ser1218 and Ser1222. The RING-type; atypical zinc finger occupies 1241–1362 (DDCVFCKMPK…GLIYCPVCNS (122 aa)).

The protein belongs to the E3 ubiquitin-protein ligase UBR1-like family. As to quaternary structure, interacts with MUB1, RPN4 and UBC2.

The protein resides in the cytoplasm. The enzyme catalyses S-ubiquitinyl-[E2 ubiquitin-conjugating enzyme]-L-cysteine + [acceptor protein]-L-lysine = [E2 ubiquitin-conjugating enzyme]-L-cysteine + N(6)-ubiquitinyl-[acceptor protein]-L-lysine.. The protein operates within protein modification; protein ubiquitination. E3 ubiquitin-protein ligase which probably functions outside the N-end rule pathway, since it lacks the residues essential for the degradation of N-end rule substrates. Mediates RPN4 ubiquitination and subsequent degradation. This chain is E3 ubiquitin-protein ligase UBR2 (UBR2), found in Saccharomyces cerevisiae (strain ATCC 204508 / S288c) (Baker's yeast).